The sequence spans 102 residues: uncharacterized protein (102 aa).

A signal peptide spans 1 to 19 (MFLFCFVLFCSLVFPLARG).

This is an uncharacterized protein from Saccharomyces cerevisiae (strain ATCC 204508 / S288c) (Baker's yeast).